We begin with the raw amino-acid sequence, 274 residues long: Glutamate--cysteine ligase regulatory subunit (274 aa).

Lys-263 is subject to N6-acetyllysine.

This sequence belongs to the aldo/keto reductase family. Glutamate--cysteine ligase light chain subfamily. Heterodimer of a catalytic heavy chain and a regulatory light chain. In terms of tissue distribution, in all tissues examined. Highest levels in skeletal muscle.

It participates in sulfur metabolism; glutathione biosynthesis; glutathione from L-cysteine and L-glutamate: step 1/2. The polypeptide is Glutamate--cysteine ligase regulatory subunit (GCLM) (Homo sapiens (Human)).